A 250-amino-acid chain; its full sequence is Coproheme decarboxylase (250 aa).

Fe-coproporphyrin III-binding positions include Arg131, 145-149, His172, and Gln185; that span reads YPMNK. Tyr145 is an active-site residue.

This sequence belongs to the ChdC family. Type 1 subfamily. Fe-coproporphyrin III serves as cofactor.

The enzyme catalyses Fe-coproporphyrin III + 2 H2O2 + 2 H(+) = heme b + 2 CO2 + 4 H2O. It catalyses the reaction Fe-coproporphyrin III + H2O2 + H(+) = harderoheme III + CO2 + 2 H2O. The catalysed reaction is harderoheme III + H2O2 + H(+) = heme b + CO2 + 2 H2O. It participates in porphyrin-containing compound metabolism; protoheme biosynthesis. Functionally, involved in coproporphyrin-dependent heme b biosynthesis. Catalyzes the decarboxylation of Fe-coproporphyrin III (coproheme) to heme b (protoheme IX), the last step of the pathway. The reaction occurs in a stepwise manner with a three-propionate intermediate. In Staphylococcus aureus (strain USA300 / TCH1516), this protein is Coproheme decarboxylase.